The primary structure comprises 509 residues: MDKLQYELQGYLEIDRYRKQRFLYPLLFREYIYALAHDHGLNSSIFYEPTENLGYDNDNKSSSLIVKRLITRLHQQNHLTISVNDSRFVGPNRSFYSQTIPEGFAGIMEIPFSVRLVSSLERERIAKYHNLRSIHSIFPFLEDKLSHLYYVSDILIPYPIHLEILLQTLRTRIRDAPSLHLLRCFLHEHHNWNSLITSTSNKSISIFSKENQRLFLFLYNSHVYECESVLVFLRKQSSHLRSISSLAFLERTHFYGKIKHLVVTPRNDSQRTLPLWFFKEPLMHYVRYQGKSIMASRCTNLLMKKWKYYLVNFWQCHFHLWSQPGRIHINELSNHSFYFLGYLLGVRLTPWVIRSQMLENSFMIDTAIKRFDTIVPIFPLIGSLVKAKFCNVSGYPISKSVWADSSDSDIIARFGWICRNLSHYHSGSSKKHSLCRIKYILRLSCARTLARKHKSTVRAICKRLGSKLLEEFLTEEHEIVSFIFRRTRLRSERIWYLDIIRIHGLVPHS.

It belongs to the intron maturase 2 family. MatK subfamily.

The protein resides in the plastid. It localises to the chloroplast. Usually encoded in the trnK tRNA gene intron. Probably assists in splicing its own and other chloroplast group II introns. The chain is Maturase K from Nymphaea odorata (White water lily).